The primary structure comprises 501 residues: Ribose import ATP-binding protein RbsA (501 aa).

2 ABC transporter domains span residues 5-241 (LQLK…VGRK) and 252-495 (APGE…VGKL). 37–44 (GENGAGKS) is a binding site for ATP.

The protein belongs to the ABC transporter superfamily. Ribose importer (TC 3.A.1.2.1) family. In terms of assembly, the complex is composed of an ATP-binding protein (RbsA), two transmembrane proteins (RbsC) and a solute-binding protein (RbsB).

It localises to the cell inner membrane. The catalysed reaction is D-ribose(out) + ATP + H2O = D-ribose(in) + ADP + phosphate + H(+). In terms of biological role, part of the ABC transporter complex RbsABC involved in ribose import. Responsible for energy coupling to the transport system. The chain is Ribose import ATP-binding protein RbsA from Salmonella typhimurium (strain LT2 / SGSC1412 / ATCC 700720).